The chain runs to 1359 residues: MLQEQSELMSTVMNNTPTTVAALAAVAAASETNGKLGSEEQPEITIPKPRSSAQLEQLLYRYRAIQNHPKENKLEIKAIEDTFRNISRDQDIYETKLDTLRKSIDKGFQYDEDLLNKHLVALQLLEKDTDVPDYFLDLPDTKNDNTTAIEVDYSEKKPIKISADFNAKAKSLGLESKFSNATKTALGDPDTEIRISARISNRINELERLPANLGTYSLDDCLEFITKDDLSSRMDTFKIKALVELKSLKLLTKQKSIRQKLINNVASQAHHNIPYLRDSPFTAAAQRSVQIRSKVIVPQTVRLAEELERQQLLEKRKKERNLHLQKINSIIDFIKERQSEQWSRQERCFQFGRLGASLHNQMEKDEQKRIERTAKQRLAALKSNDEEAYLKLLDQTKDTRITQLLRQTNSFLDSLSEAVRAQQNEAKILHGEEVQPITDEEREKTDYYEVAHRIKEKIDKQPSILVGGTLKEYQLRGLEWMVSLYNNHLNGILADEMGLGKTIQSISLITYLYEVKKDIGPFLVIVPLSTITNWTLEFEKWAPSLNTIIYKGTPNQRHSLQHQIRVGNFDVLLTTYEYIIKDKSLLSKHDWAHMIIDEGHRMKNAQSKLSFTISHYYRTRNRLILTGTPLQNNLPELWALLNFVLPKIFNSAKTFEDWFNTPFANTGTQEKLELTEEETLLIIRRLHKVLRPFLLRRLKKEVEKDLPDKVEKVIKCKLSGLQQQLYQQMLKHNALFVGAGTEGATKGGIKGLNNKIMQLRKICNHPFVFDEVEGVVNPSRGNSDLLFRVAGKFELLDRVLPKFKASGHRVLMFFQMTQVMDIMEDFLRMKDLKYMRLDGSTKTEERTEMLNAFNAPDSDYFCFLLSTRAGGLGLNLQTADTVIIFDTDWNPHQDLQAQDRAHRIGQKNEVRILRLITTDSVEEVILERAMQKLDIDGKVIQAGKFDNKSTAEEQEAFLRRLIESETNRDDDDKAELDDDELNDTLARSADEKILFDKIDKERMNQERADAKAQGLRVPPPRLIQLDELPKVFREDIEEHFKKEDSEPLGRIRQKKRVYYDDGLTEEQFLEAVEDDNMSLEDAIKKRREARERRRLRQNGTKENEIETLENTPEASETSLIENNSFTAAVDEETNADKETTASRSKRRSSRKKRTISIVTAEDKENTQEESTSQENGGAKVEEEVKSSSVEIINGSESKKKKPKLTVKIKLNKTTVLENNDGKRAEEKPESKSPAKKTAAKKTKTKSKSLGIFPTVEKLVEEMREQLDEVDSHPRTSIFEKLPSKRDYPDYFKVIEKPMAIDIILKNCKNGTYKTLEEVRQALQTMFENARFYNEEGSWVYVDADKLNEFTDEWFKEHSS.

Ser38 carries the phosphoserine modification. One can recognise an HSA domain in the interval Leu307–Ser383. One can recognise a Helicase ATP-binding domain in the interval Val482–Lys647. Residue Asp495–Thr502 participates in ATP binding. Residues Asp597–His600 carry the DEGH box motif. The 162-residue stretch at Leu795–Ala956 folds into the Helicase C-terminal domain. Residues Arg1090 to Ser1246 form a disordered region. A compositionally biased stretch (polar residues) spans Leu1108 to Thr1126. Composition is skewed to basic residues over residues Arg1143–Thr1154 and Lys1198–Leu1210. The span at Asn1219–Ser1232 shows a compositional bias: basic and acidic residues. The span at Pro1233–Ser1246 shows a compositional bias: basic residues. The Bromo domain maps to Lys1257 to His1357.

This sequence belongs to the SNF2/RAD54 helicase family. Interacts directly with SFH1, CSE4, histones H3, H4 and H2B, and via its N-terminus, with RSC8. Interacts with LDB7, NPL6 and RTT102. Component of the two forms of the RSC complex composed of at least either RSC1 or RSC2, and ARP7, ARP9, LDB7, NPL6, RSC3, RSC30, RSC4, RSC58, RSC6, RSC8, RSC9, SFH1, STH1, HTL1 and probably RTT102. The complexes interact with histone and histone variant components of centromeric chromatin.

The protein resides in the nucleus. The catalysed reaction is ATP + H2O = ADP + phosphate + H(+). Its function is as follows. Catalytic component of the chromatin structure-remodeling complex (RSC), which is involved in transcription regulation and nucleosome positioning. RSC is responsible for the transfer of a histone octamer from a nucleosome core particle to naked DNA. The reaction requires ATP and involves an activated RSC-nucleosome intermediate. Remodeling reaction also involves DNA translocation, DNA twist and conformational change. As a reconfigurer of centromeric and flanking nucleosomes, RSC complex is required both for proper kinetochore function in chromosome segregation and, via a PKC1-dependent signaling pathway, for organization of the cellular cytoskeleton. This subunit is the essential ATPase of the complex. It is a DNA translocase capable of nucleosome remodeling. Required for full expression of early meiotic genes. Essential for mitotic growth and repression of CHA1 expression. Also involved in G2 phase control. The sequence is that of Nuclear protein STH1/NPS1 (STH1) from Saccharomyces cerevisiae (strain ATCC 204508 / S288c) (Baker's yeast).